We begin with the raw amino-acid sequence, 249 residues long: Type III pantothenate kinase (249 aa).

ATP is bound at residue 8–15 (DAGNSRLK). Residues Y95 and 102-105 (GVDR) contribute to the substrate site. The active-site Proton acceptor is the D104. Residue D125 participates in K(+) binding. Position 128 (T128) interacts with ATP. Residue T179 participates in substrate binding.

The protein belongs to the type III pantothenate kinase family. As to quaternary structure, homodimer. Requires NH4(+) as cofactor. It depends on K(+) as a cofactor.

The protein localises to the cytoplasm. It carries out the reaction (R)-pantothenate + ATP = (R)-4'-phosphopantothenate + ADP + H(+). It participates in cofactor biosynthesis; coenzyme A biosynthesis; CoA from (R)-pantothenate: step 1/5. Catalyzes the phosphorylation of pantothenate (Pan), the first step in CoA biosynthesis. This chain is Type III pantothenate kinase, found in Alkalilimnicola ehrlichii (strain ATCC BAA-1101 / DSM 17681 / MLHE-1).